The primary structure comprises 296 residues: Pseudouridine-5'-phosphate glycosidase (296 aa).

Glu-21 serves as the catalytic Proton donor. Substrate-binding residues include Lys-81 and Val-101. Mn(2+) is bound at residue Asp-130. 132-134 is a substrate binding site; it reads SQD. The Nucleophile role is filled by Lys-151.

This sequence belongs to the pseudouridine-5'-phosphate glycosidase family. Homotrimer. It depends on Mn(2+) as a cofactor.

The enzyme catalyses D-ribose 5-phosphate + uracil = psi-UMP + H2O. Catalyzes the reversible cleavage of pseudouridine 5'-phosphate (PsiMP) to ribose 5-phosphate and uracil. Functions biologically in the cleavage direction, as part of a pseudouridine degradation pathway. The chain is Pseudouridine-5'-phosphate glycosidase from Fervidobacterium nodosum (strain ATCC 35602 / DSM 5306 / Rt17-B1).